The chain runs to 3430 residues: Genome polyprotein (3430 aa).

The tract at residues 2 to 15 is interaction with host EXOC1; that stretch reads SKKPGGPGKNRAVN. Over 2 to 105 the chain is Cytoplasmic; the sequence is SKKPGGPGKN…NRRSTKQKKR (104 aa). The interval 37–72 is hydrophobic; homodimerization of capsid protein C; sequence LIDGKGPIRFVLALLAFFRFTAIAPTRAVLDRWRGV. A propeptide spans 106-123 (ER anchor for the capsid protein C, removed in mature form by serine protease NS3); sequence GGTAGFTILLGLIACAGA. The chain crosses the membrane as a helical span at residues 106-126; that stretch reads GGTAGFTILLGLIACAGAVTL. Over 127–248 the chain is Extracellular; it reads SNFQGKVMMT…KATRYLVKTE (122 aa). Asn138 is a glycosylation site (N-linked (GlcNAc...) asparagine; by host). Residues 249–269 form a helical membrane-spanning segment; the sequence is SWILRNPGYALVAAVIGWMLG. The Cytoplasmic segment spans residues 270-275; that stretch reads SNTMQR. A helical transmembrane segment spans residues 276 to 290; the sequence is VVFAILLLLVAPAYS. The Extracellular segment spans residues 291–739; the sequence is FNCLGMSNRD…QVFGGAFRSL (449 aa). 6 disulfide bridges follow: Cys293–Cys320, Cys350–Cys406, Cys364–Cys395, Cys382–Cys411, Cys476–Cys574, and Cys591–Cys622. Residues 388 to 401 are fusion peptide; the sequence is DRGWGNGCGLFGKG. Residues 740–760 form a helical membrane-spanning segment; that stretch reads FGGMSWITQGLLGALLLWMGI. Residues 761 to 766 lie on the Cytoplasmic side of the membrane; that stretch reads NARDRS. A helical membrane pass occupies residues 767–787; sequence IAMTFLAVGGVLLFLSVNVHA. Topologically, residues 788 to 1212 are extracellular; it reads DTGCAIDIGR…AFAEANSGGD (425 aa). Disulfide bonds link Cys791–Cys802 and Cys842–Cys930. Asn917, Asn962, and Asn994 each carry an N-linked (GlcNAc...) asparagine; by host glycan. 4 disulfides stabilise this stretch: Cys966/Cys1010, Cys1067/Cys1116, Cys1078/Cys1099, and Cys1100/Cys1103. The helical transmembrane segment at 1213 to 1233 threads the bilayer; the sequence is VVHLALMATFKIQPVFLVASF. The Cytoplasmic segment spans residues 1234-1243; that stretch reads LKARWTNQES. Residues 1244 to 1264 traverse the membrane as a helical segment; it reads ILLMLAAAFFQMAYYDAKNVL. Topologically, residues 1265–1278 are lumenal; it reads SWEVPDVLNSLSVA. The chain crosses the membrane as a helical span at residues 1279 to 1299; the sequence is WMILRAISFTNTSNVVVPLLA. Residues 1300-1307 are Cytoplasmic-facing; it reads LLTPGLKC. A helical transmembrane segment spans residues 1308-1328; the sequence is LNLDVYRILLLMVGVGSLIKE. Topologically, residues 1329–1340 are lumenal; the sequence is KRSSAAKKKGAC. Residues 1341 to 1361 form a helical membrane-spanning segment; the sequence is LICLALASTGVFNPMILAAGL. The Cytoplasmic portion of the chain corresponds to 1362–1371; sequence MACDPNRKRG. A helical transmembrane segment spans residues 1372-1392; it reads WPATEVMTAVGLMFAIVGGLA. At 1393–1395 the chain is on the lumenal side; sequence ELD. The chain crosses the membrane as a helical span at residues 1396 to 1416; that stretch reads IDSMAIPMTIAGLMFAAFVIS. Topologically, residues 1417–1473 are cytoplasmic; sequence GKSTDMWIERTADITWESDAEITGSSERVDVRLDDDGNFQLMNDPGAPWKIWMLRMA. Residues 1424–1463 are interacts with and activates NS3 protease; sequence IERTADITWESDAEITGSSERVDVRLDDDGNFQLMNDPGA. The segment at residues 1474–1494 is an intramembrane region (helical); it reads CLAISAYTPWAILPSVIGFWI. Residues 1495-2170 lie on the Cytoplasmic side of the membrane; the sequence is TLQYTKRGGV…RMALEELPDA (676 aa). The Peptidase S7 domain maps to 1502-1679; the sequence is GGVLWDTPSP…ERMEEPAPAG (178 aa). Active-site charge relay system; for serine protease NS3 activity residues include His1552, Asp1576, and Ser1636. The Helicase ATP-binding domain maps to 1682–1838; sequence PEMLRKKQIT…ESNAPISDMQ (157 aa). Positions 1686 to 1689 are important for RNA-binding; that stretch reads RKKQ. 1695–1702 contacts ATP; that stretch reads LHPGAGKT. Positions 1786 to 1789 match the DEAH box motif; it reads DEAH. A Helicase C-terminal domain is found at 1849 to 2014; that stretch reads GYEWITEYVG…GLVAQLYQPE (166 aa). At Lys1890 the chain carries N6-acetyllysine; by host. The segment at 2165–2169 is regulates the ATPase activity of NS3 helicase; it reads EELPD. The helical transmembrane segment at 2171–2191 threads the bilayer; that stretch reads LQTIVLIALLSVMSLGVFFLL. Residues 2192 to 2196 are Lumenal-facing; the sequence is MQRKG. An intramembrane region (helical) is located at residues 2197–2217; it reads IGKIGLGGVILGAATFFCWMA. Residue Glu2218 is a topological domain, lumenal. Residues 2219-2239 traverse the membrane as a helical segment; that stretch reads VPGTKIAGMLLLSLLLMIVLI. At 2240 to 2254 the chain is on the cytoplasmic side; that stretch reads PEPEKQRSQTDNQLA. The chain crosses the membrane as a helical span at residues 2255-2275; the sequence is VFLICVLTLVGAVAANEMGWL. Topologically, residues 2276-2309 are lumenal; that stretch reads DKTKNDIGSLLGHRPEARETTLGVESFLLDLRPA. The helical intramembrane region spans 2310–2330; it reads TAWSLYAVTTAVLTPLLKHLI. At 2331–2377 the chain is on the lumenal side; the sequence is TSDYINTSLTSINVQASALFTLARGFPFVDVGVSALLLAVGCWGQVT. A helical transmembrane segment spans residues 2378–2398; that stretch reads LTVTVTAAALLFCHYAYMVPG. Residues 2399–2441 are Cytoplasmic-facing; that stretch reads WQAEAMRSAQRRTAAGIMKNVVVDGIVATDVPELERTTPVMQK. Residues 2442 to 2462 form a helical membrane-spanning segment; that stretch reads KVGQIILILVSMAAVVVNPSV. Over 2463–2467 the chain is Lumenal; the sequence is RTVRE. The helical transmembrane segment at 2468 to 2488 threads the bilayer; the sequence is AGILTTAAAVTLWENGASSVW. The Cytoplasmic portion of the chain corresponds to 2489 to 3430; it reads NATTAIGLCH…DTIVVEDTVL (942 aa). Residues 2526-2791 form the mRNA cap 0-1 NS5-type MT domain; the sequence is GGAKGRTLGE…DVNLGSGTRA (266 aa). Ser2581 contacts S-adenosyl-L-methionine. Ser2581 is modified (phosphoserine). Lys2586 (for 2'-O-MTase activity) is an active-site residue. 6 residues coordinate S-adenosyl-L-methionine: Gly2611, Trp2612, Thr2629, Lys2630, Asp2656, and Val2657. Asp2671 functions as the For 2'-O-MTase activity in the catalytic mechanism. Ile2672 is an S-adenosyl-L-methionine binding site. Residues Lys2707 and Glu2743 each act as for 2'-O-MTase activity in the active site. An S-adenosyl-L-methionine-binding site is contributed by Tyr2745. A Nuclear localization signal motif is present at residues 2914–2916; sequence RDK. 4 residues coordinate Zn(2+): Glu2965, His2969, Cys2974, and Cys2977. Residues 3055–3207 enclose the RdRp catalytic domain; the sequence is GKVYADDTAG…KPLDDRFATS (153 aa). Zn(2+) contacts are provided by His3242, Cys3258, and Cys3377. Positions 3428-3430 match the PDZ-binding motif; the sequence is TVL.

In the N-terminal section; belongs to the class I-like SAM-binding methyltransferase superfamily. mRNA cap 0-1 NS5-type methyltransferase family. Homodimer. Interacts (via N-terminus) with host EXOC1 (via C-terminus); this interaction results in EXOC1 degradation through the proteasome degradation pathway. Interacts with host DDX56; this interaction plays an important role in genomic RNA encapsidation. As to quaternary structure, forms heterodimers with envelope protein E in the endoplasmic reticulum and Golgi. In terms of assembly, homodimer; in the endoplasmic reticulum and Golgi. Homodimer; Homohexamer when secreted. Interacts with envelope protein E. NS1 interacts with NS4B. Interacts with host complement protein CFH; this interaction leads to the degradation of C3. As to quaternary structure, interacts (via N-terminus) with serine protease NS3. In terms of assembly, forms a heterodimer with serine protease NS3. May form homooligomers. Forms a heterodimer with NS2B. Interacts with NS4B. Interacts with unphosphorylated RNA-directed RNA polymerase NS5; this interaction stimulates RNA-directed RNA polymerase NS5 guanylyltransferase activity. As to quaternary structure, interacts with Serine protease/Helicase NS3. Interacts with NS1. In terms of assembly, homodimer. Interacts with host STAT2; this interaction inhibits the phosphorylation of the latter, and, when all viral proteins are present (polyprotein), targets STAT2 for degradation. Interacts with host PAF1 complex. Specific enzymatic cleavages in vivo yield mature proteins. Cleavages in the lumen of endoplasmic reticulum are performed by host signal peptidase, whereas cleavages in the cytoplasmic side are performed by serine protease NS3. Signal cleavage at the 2K-4B site requires a prior NS3 protease-mediated cleavage at the 4A-2K site. Post-translationally, cleaved in post-Golgi vesicles by a host furin, releasing the mature small envelope protein M, and peptide pr. This cleavage is incomplete as up to 30% of viral particles still carry uncleaved prM. In terms of processing, not N-glycosylated. N-glycosylated. The excreted form is glycosylated and this is required for efficient secretion of the protein from infected cells. Post-translationally, acetylated by host KAT5. Acetylation modulates NS3 RNA-binding and unwinding activities and plays an important positive role for viral replication. In terms of processing, phosphorylated on serines residues. This phosphorylation may trigger NS5 nuclear localization.

It localises to the virion. The protein resides in the host nucleus. Its subcellular location is the host cytoplasm. It is found in the host perinuclear region. The protein localises to the secreted. It localises to the virion membrane. The protein resides in the host endoplasmic reticulum membrane. It carries out the reaction Selective hydrolysis of -Xaa-Xaa-|-Yaa- bonds in which each of the Xaa can be either Arg or Lys and Yaa can be either Ser or Ala.. The enzyme catalyses RNA(n) + a ribonucleoside 5'-triphosphate = RNA(n+1) + diphosphate. The catalysed reaction is a ribonucleoside 5'-triphosphate + H2O = a ribonucleoside 5'-diphosphate + phosphate + H(+). It catalyses the reaction ATP + H2O = ADP + phosphate + H(+). It carries out the reaction a 5'-end (5'-triphosphoguanosine)-ribonucleoside in mRNA + S-adenosyl-L-methionine = a 5'-end (N(7)-methyl 5'-triphosphoguanosine)-ribonucleoside in mRNA + S-adenosyl-L-homocysteine. The enzyme catalyses a 5'-end (N(7)-methyl 5'-triphosphoguanosine)-ribonucleoside in mRNA + S-adenosyl-L-methionine = a 5'-end (N(7)-methyl 5'-triphosphoguanosine)-(2'-O-methyl-ribonucleoside) in mRNA + S-adenosyl-L-homocysteine + H(+). Functionally, plays a role in virus budding by binding to the cell membrane and gathering the viral RNA into a nucleocapsid that forms the core of a mature virus particle. During virus entry, may induce genome penetration into the host cytoplasm after hemifusion induced by the surface proteins. Can migrate to the cell nucleus where it modulates host functions. Overcomes the anti-viral effects of host EXOC1 by sequestering and degrading the latter through the proteasome degradation pathway. In terms of biological role, inhibits RNA silencing by interfering with host Dicer. Prevents premature fusion activity of envelope proteins in trans-Golgi by binding to envelope protein E at pH6.0. After virion release in extracellular space, gets dissociated from E dimers. Its function is as follows. Acts as a chaperone for envelope protein E during intracellular virion assembly by masking and inactivating envelope protein E fusion peptide. prM is the only viral peptide matured by host furin in the trans-Golgi network probably to avoid catastrophic activation of the viral fusion activity in acidic Golgi compartment prior to virion release. prM-E cleavage is inefficient, and many virions are only partially matured. These uncleaved prM would play a role in immune evasion. Functionally, may play a role in virus budding. Exerts cytotoxic effects by activating a mitochondrial apoptotic pathway through M ectodomain. May display a viroporin activity. In terms of biological role, binds to host cell surface receptor and mediates fusion between viral and cellular membranes. Envelope protein is synthesized in the endoplasmic reticulum in the form of heterodimer with protein prM. They play a role in virion budding in the ER, and the newly formed immature particle is covered with 60 spikes composed of heterodimer between precursor prM and envelope protein E. The virion is transported to the Golgi apparatus where the low pH causes dissociation of PrM-E heterodimers and formation of E homodimers. prM-E cleavage is inefficient, and many virions are only partially matured. These uncleaved prM would play a role in immune evasion. Involved in immune evasion, pathogenesis and viral replication. Once cleaved off the polyprotein, is targeted to three destinations: the viral replication cycle, the plasma membrane and the extracellular compartment. Essential for viral replication. Required for formation of the replication complex and recruitment of other non-structural proteins to the ER-derived membrane structures. Excreted as a hexameric lipoparticle that plays a role against host immune response. Antagonizing the complement function. Binds to the host macrophages and dendritic cells. Inhibits signal transduction originating from Toll-like receptor 3 (TLR3). Its function is as follows. Component of the viral RNA replication complex that functions in virion assembly and antagonizes the host alpha/beta interferon antiviral response. Functionally, required cofactor for the serine protease function of NS3. May have membrane-destabilizing activity and form viroporins. In terms of biological role, displays three enzymatic activities: serine protease, NTPase and RNA helicase. NS3 serine protease, in association with NS2B, performs its autocleavage and cleaves the polyprotein at dibasic sites in the cytoplasm: C-prM, NS2A-NS2B, NS2B-NS3, NS3-NS4A, NS4A-2K and NS4B-NS5. NS3 RNA helicase binds RNA and unwinds dsRNA in the 3' to 5' direction. NS3 supports the separation of RNA daughter and template strands during viral replication. The helicase part is involved in the inhibition of phosphorylation of host STAT1, and thereby inhibition of host type-I IFN signaling. In addition, NS3 assists the initiation of replication by unwinding the RNA secondary structure in the 3' non-translated region (NTR). Inhibits STAT2 translocation in the nucleus after IFN-alpha treatment. Regulates the ATPase activity of the NS3 helicase activity. NS4A allows NS3 helicase to conserve energy during unwinding. Its function is as follows. Functions as a signal peptide for NS4B and is required for the interferon antagonism activity of the latter. Functionally, induces the formation of ER-derived membrane vesicles where the viral replication takes place. Inhibits interferon (IFN)-induced host STAT1 phosphorylation and nuclear translocation, thereby preventing the establishment of cellular antiviral state by blocking the IFN-alpha/beta pathway. Inhibits STAT2 translocation in the nucleus after IFN-alpha treatment. In terms of biological role, replicates the viral (+) and (-) RNA genome, and performs the capping of genomes in the cytoplasm. NS5 methylates viral RNA cap at guanine N-7 and ribose 2'-O positions. Besides its role in RNA genome replication, also prevents the establishment of cellular antiviral state by blocking the interferon-alpha/beta (IFN-alpha/beta) signaling pathway. Inhibits host TYK2 and STAT2 phosphorylation, thereby preventing activation of JAK-STAT signaling pathway. The protein is Genome polyprotein of Aedes (Tropical bont tick).